Here is a 1064-residue protein sequence, read N- to C-terminus: Carbamoyl phosphate synthase large chain (1064 aa).

Residues 1–401 are carboxyphosphate synthetic domain; the sequence is MPKRNDIKKI…SLLKAVRSLE (401 aa). Residues Arg-129, Arg-169, Gly-175, Gly-176, Glu-208, Ile-210, Glu-215, Gly-241, Val-242, His-243, Gln-284, and Glu-298 each coordinate ATP. The ATP-grasp 1 domain maps to 133–327; the sequence is KELCERIGEP…IAKMSAKIAI (195 aa). 3 residues coordinate Mg(2+): Gln-284, Glu-298, and Asn-300. Mn(2+) is bound by residues Gln-284, Glu-298, and Asn-300. The oligomerization domain stretch occupies residues 402–546; the sequence is IGVFHNDLQE…YSTYEWENES (145 aa). The tract at residues 547–929 is carbamoyl phosphate synthetic domain; it reads KRSSKEKIIV…ALYKSFEAAK (383 aa). In terms of domain architecture, ATP-grasp 2 spans 671-861; it reads EKALQDLEIP…MAQLATQMIL (191 aa). ATP contacts are provided by Arg-707, Ser-746, Leu-748, Glu-752, Gly-777, Val-778, His-779, Ser-780, Gln-820, and Glu-832. The Mg(2+) site is built by Gln-820, Glu-832, and Asn-834. Residues Gln-820, Glu-832, and Asn-834 each contribute to the Mn(2+) site. The MGS-like domain occupies 930 to 1064; sequence LHMADYGSVL…QSRSFTTKNI (135 aa). The segment at 930–1064 is allosteric domain; it reads LHMADYGSVL…QSRSFTTKNI (135 aa).

This sequence belongs to the CarB family. In terms of assembly, composed of two chains; the small (or glutamine) chain promotes the hydrolysis of glutamine to ammonia, which is used by the large (or ammonia) chain to synthesize carbamoyl phosphate. Tetramer of heterodimers (alpha,beta)4. The cofactor is Mg(2+). It depends on Mn(2+) as a cofactor.

The catalysed reaction is hydrogencarbonate + L-glutamine + 2 ATP + H2O = carbamoyl phosphate + L-glutamate + 2 ADP + phosphate + 2 H(+). The enzyme catalyses hydrogencarbonate + NH4(+) + 2 ATP = carbamoyl phosphate + 2 ADP + phosphate + 2 H(+). It participates in amino-acid biosynthesis; L-arginine biosynthesis; carbamoyl phosphate from bicarbonate: step 1/1. The protein operates within pyrimidine metabolism; UMP biosynthesis via de novo pathway; (S)-dihydroorotate from bicarbonate: step 1/3. Functionally, large subunit of the glutamine-dependent carbamoyl phosphate synthetase (CPSase). CPSase catalyzes the formation of carbamoyl phosphate from the ammonia moiety of glutamine, carbonate, and phosphate donated by ATP, constituting the first step of 2 biosynthetic pathways, one leading to arginine and/or urea and the other to pyrimidine nucleotides. The large subunit (synthetase) binds the substrates ammonia (free or transferred from glutamine from the small subunit), hydrogencarbonate and ATP and carries out an ATP-coupled ligase reaction, activating hydrogencarbonate by forming carboxy phosphate which reacts with ammonia to form carbamoyl phosphate. This is Carbamoyl phosphate synthase large chain from Lactococcus lactis subsp. lactis (strain IL1403) (Streptococcus lactis).